The chain runs to 68 residues: UPF0435 protein Sca_1453 (68 aa).

This sequence belongs to the UPF0435 family.

This Staphylococcus carnosus (strain TM300) protein is UPF0435 protein Sca_1453.